The sequence spans 138 residues: Large ribosomal subunit protein uL16 (138 aa).

Positions 1 to 13 are enriched in basic residues; it reads MLQPKRRKYRKEQ. The segment at 1–24 is disordered; that stretch reads MLQPKRRKYRKEQKGRNTGKATRG.

Belongs to the universal ribosomal protein uL16 family. In terms of assembly, part of the 50S ribosomal subunit.

Binds 23S rRNA and is also seen to make contacts with the A and possibly P site tRNAs. The sequence is that of Large ribosomal subunit protein uL16 from Burkholderia lata (strain ATCC 17760 / DSM 23089 / LMG 22485 / NCIMB 9086 / R18194 / 383).